The following is a 464-amino-acid chain: Glutamate--tRNA ligase (464 aa).

The 'HIGH' region signature appears at 9–19 (PSPTGYLHIGG). The 'KMSKS' region motif lies at 242 to 246 (KISKR). K245 is an ATP binding site.

This sequence belongs to the class-I aminoacyl-tRNA synthetase family. Glutamate--tRNA ligase type 1 subfamily. In terms of assembly, monomer.

It localises to the cytoplasm. It catalyses the reaction tRNA(Glu) + L-glutamate + ATP = L-glutamyl-tRNA(Glu) + AMP + diphosphate. In terms of biological role, catalyzes the attachment of glutamate to tRNA(Glu) in a two-step reaction: glutamate is first activated by ATP to form Glu-AMP and then transferred to the acceptor end of tRNA(Glu). This chain is Glutamate--tRNA ligase, found in Neisseria meningitidis serogroup C (strain 053442).